A 181-amino-acid polypeptide reads, in one-letter code: Acireductone dioxygenase (181 aa).

Residues H98, H100, E104, and H142 each contribute to the Fe(2+) site. Ni(2+) contacts are provided by H98, H100, E104, and H142.

This sequence belongs to the acireductone dioxygenase (ARD) family. In terms of assembly, monomer. The cofactor is Fe(2+). Requires Ni(2+) as cofactor.

The catalysed reaction is 1,2-dihydroxy-5-(methylsulfanyl)pent-1-en-3-one + O2 = 3-(methylsulfanyl)propanoate + CO + formate + 2 H(+). The enzyme catalyses 1,2-dihydroxy-5-(methylsulfanyl)pent-1-en-3-one + O2 = 4-methylsulfanyl-2-oxobutanoate + formate + 2 H(+). Its pathway is amino-acid biosynthesis; L-methionine biosynthesis via salvage pathway; L-methionine from S-methyl-5-thio-alpha-D-ribose 1-phosphate: step 5/6. Functionally, catalyzes 2 different reactions between oxygen and the acireductone 1,2-dihydroxy-3-keto-5-methylthiopentene (DHK-MTPene) depending upon the metal bound in the active site. Fe-containing acireductone dioxygenase (Fe-ARD) produces formate and 2-keto-4-methylthiobutyrate (KMTB), the alpha-ketoacid precursor of methionine in the methionine recycle pathway. Ni-containing acireductone dioxygenase (Ni-ARD) produces methylthiopropionate, carbon monoxide and formate, and does not lie on the methionine recycle pathway. The chain is Acireductone dioxygenase from Synechococcus sp. (strain ATCC 27144 / PCC 6301 / SAUG 1402/1) (Anacystis nidulans).